Consider the following 548-residue polypeptide: Glucose-6-phosphate isomerase (548 aa).

Residue glutamate 355 is the Proton donor of the active site. Residues histidine 386 and lysine 514 contribute to the active site.

Belongs to the GPI family.

It localises to the cytoplasm. It catalyses the reaction alpha-D-glucose 6-phosphate = beta-D-fructose 6-phosphate. The protein operates within carbohydrate biosynthesis; gluconeogenesis. Its pathway is carbohydrate degradation; glycolysis; D-glyceraldehyde 3-phosphate and glycerone phosphate from D-glucose: step 2/4. Catalyzes the reversible isomerization of glucose-6-phosphate to fructose-6-phosphate. The chain is Glucose-6-phosphate isomerase from Yersinia enterocolitica serotype O:8 / biotype 1B (strain NCTC 13174 / 8081).